Here is a 447-residue protein sequence, read N- to C-terminus: N-succinylarginine dihydrolase (447 aa).

Substrate is bound by residues 19-28 (GGLAVGNIAS), N110, and 137-138 (HR). The active site involves E174. R213 lines the substrate pocket. The active site involves H249. Positions 251 and 362 each coordinate substrate. C368 functions as the Nucleophile in the catalytic mechanism.

This sequence belongs to the succinylarginine dihydrolase family. As to quaternary structure, homodimer.

It catalyses the reaction N(2)-succinyl-L-arginine + 2 H2O + 2 H(+) = N(2)-succinyl-L-ornithine + 2 NH4(+) + CO2. The protein operates within amino-acid degradation; L-arginine degradation via AST pathway; L-glutamate and succinate from L-arginine: step 2/5. Catalyzes the hydrolysis of N(2)-succinylarginine into N(2)-succinylornithine, ammonia and CO(2). The sequence is that of N-succinylarginine dihydrolase from Nitrosospira multiformis (strain ATCC 25196 / NCIMB 11849 / C 71).